Reading from the N-terminus, the 296-residue chain is Bifunctional protein FolD (296 aa).

NADP(+) is bound by residues 166–168 (GRS), Ser195, and Ile236.

This sequence belongs to the tetrahydrofolate dehydrogenase/cyclohydrolase family. In terms of assembly, homodimer.

It carries out the reaction (6R)-5,10-methylene-5,6,7,8-tetrahydrofolate + NADP(+) = (6R)-5,10-methenyltetrahydrofolate + NADPH. The enzyme catalyses (6R)-5,10-methenyltetrahydrofolate + H2O = (6R)-10-formyltetrahydrofolate + H(+). Its pathway is one-carbon metabolism; tetrahydrofolate interconversion. In terms of biological role, catalyzes the oxidation of 5,10-methylenetetrahydrofolate to 5,10-methenyltetrahydrofolate and then the hydrolysis of 5,10-methenyltetrahydrofolate to 10-formyltetrahydrofolate. This chain is Bifunctional protein FolD, found in Chlorobium limicola (strain DSM 245 / NBRC 103803 / 6330).